Here is a 1806-residue protein sequence, read N- to C-terminus: Non-reducing polyketide synthase pks12 (1806 aa).

The Starter acyltransferase (SAT) domain occupies 30–191 (TDTMSGMISL…TKLHLRGKVH (162 aa)). A Ketosynthase family 3 (KS3) domain is found at 330–755 (ENAIAIVGAG…GSNSALICGE (426 aa)). Residues C504, H639, and H678 each act as for beta-ketoacyl synthase activity in the active site. Residues 860-1156 (LAFSGQSKQT…HNPSQHTFLG (297 aa)) are malonyl-CoA:ACP transacylase (MAT) domain. Residues 862–1147 (FSGQSKQTIG…IIPMVKRATH (286 aa)) form the Malonyl-CoA:ACP transacylase (MAT) domain. The active-site For acyl/malonyl transferase activity is S947. The N-terminal hotdog fold stretch occupies residues 1249 to 1383 (PQTPPLKLVT…GRFSVTSHID (135 aa)). In terms of domain architecture, PKS/mFAS DH spans 1249-1558 (PQTPPLKLVT…FSRFPIAKLE (310 aa)). A product template (PT) domain region spans residues 1249 to 1558 (PQTPPLKLVT…FSRFPIAKLE (310 aa)). H1288 serves as the catalytic Proton acceptor; for dehydratase activity. Residues 1404–1558 (SERLMAGRAY…FSRFPIAKLE (155 aa)) form a C-terminal hotdog fold region. Residue D1468 is the Proton donor; for dehydratase activity of the active site. Residues 1727–1804 (QSKLRIRQRI…ELVDYVVISS (78 aa)) enclose the Carrier domain. O-(pantetheine 4'-phosphoryl)serine is present on S1764.

It depends on pantetheine 4'-phosphate as a cofactor.

It participates in secondary metabolite biosynthesis. Functionally, non-reducing polyketide synthase; part of the gene cluster that mediates the biosynthesis of mitorubrinol and mitorubrinic acid, two virulence factors that improve T.marneffei intracellular survival in macrophages. The two polyketide synthases pks12 and pks11 are probably responsible for sequential use in the biosynthesis of mitorubrinol and mitorubrinic acid. The first part of the biosynthesis is probably catalyzed by pks12, which synthesized orsellinic acid. This tetraketide is then used as a starter unit for pks11, which possesses a SAT domain, in the second part of the biosynthesis. Pks11, contains a methyltransferase domain, also served that methylates the products, using a methyl group from S-adenosylmethionine. This is Non-reducing polyketide synthase pks12 from Talaromyces marneffei (Penicillium marneffei).